Reading from the N-terminus, the 299-residue chain is MEEPSRPSSDTLTTVESSSGEPDKEVASPDGAAPATFSSVEEPSPNPTAMPPVWDHGGPLQQVAYPASDSCQTGSTNTGVGTNEDLRLPRRRPPPGKQIPCSSPGCCLSFPSVRDLAQHLRTHCPPTQSLEGKLFRCSALSCTESFPSMQELVAHGKLHYKPNRYFKCENCLLRFRTHRSLFKHLHVCIDHGQNPAPPPPPALDKEPPVPERPPESDPSSSLGLPFPLLEPFTSAPTGPFLPYLNPAPFGLSPPRLRPFLAATPGPPASSTAIWKKSQGATSSPRRPQGGSDAPSGACR.

Polar residues-rich tracts occupy residues methionine 1–glycine 20 and aspartate 69–glycine 81. Residues methionine 1–glutamine 98 form a disordered region. 2 consecutive C2H2-type zinc fingers follow at residues isoleucine 99 to histidine 123 and phenylalanine 135 to histidine 159. The C2H2-type 3; degenerate zinc-finger motif lies at phenylalanine 166–aspartate 190. Disordered stretches follow at residues glutamine 193–leucine 228 and proline 254–arginine 299. Residues leucine 203–glutamate 215 are compositionally biased toward basic and acidic residues. The segment covering aspartate 217 to leucine 228 has biased composition (low complexity).

The protein belongs to the krueppel C2H2-type zinc-finger protein family.

The protein localises to the nucleus. Its function is as follows. May be involved in transcriptional regulation. In Mus musculus (Mouse), this protein is Zinc finger protein 414 (Znf414).